Reading from the N-terminus, the 360-residue chain is Probable neutral protease 2 homolog A (360 aa).

The signal sequence occupies residues 1 to 17; the sequence is MQFTALLAALGAPLALA. Positions 18-183 are excised as a propeptide; that stretch reads ASIPAAAHNH…DDSTGVIDKR (166 aa). 3 disulfides stabilise this stretch: Cys191-Cys262, Cys269-Cys287, and Cys300-Cys360. N-linked (GlcNAc...) asparagine glycosylation is present at Asn205. His311 is a Zn(2+) binding site. Residue Glu312 is part of the active site. Residues His315 and Asp326 each coordinate Zn(2+).

The protein belongs to the peptidase M35 family. The cofactor is Zn(2+).

Its subcellular location is the secreted. It catalyses the reaction Preferential cleavage of bonds with hydrophobic residues in P1'. Also 3-Asn-|-Gln-4 and 8-Gly-|-Ser-9 bonds in insulin B chain.. Functionally, probable secreted metalloprotease that shows high activities on basic nuclear substrates such as histone and protamine. May be involved in virulence. In Trichophyton rubrum (Athlete's foot fungus), this protein is Probable neutral protease 2 homolog A (NpII-A).